The following is a 575-amino-acid chain: Sulfite reductase [NADPH] hemoprotein beta-component (575 aa).

C440, C446, C485, and C489 together coordinate [4Fe-4S] cluster. C489 serves as a coordination point for siroheme.

This sequence belongs to the nitrite and sulfite reductase 4Fe-4S domain family. In terms of assembly, alpha(8)-beta(8). The alpha component is a flavoprotein, the beta component is a hemoprotein. The cofactor is siroheme. It depends on [4Fe-4S] cluster as a cofactor.

It carries out the reaction hydrogen sulfide + 3 NADP(+) + 3 H2O = sulfite + 3 NADPH + 4 H(+). Its pathway is sulfur metabolism; hydrogen sulfide biosynthesis; hydrogen sulfide from sulfite (NADPH route): step 1/1. In terms of biological role, component of the sulfite reductase complex that catalyzes the 6-electron reduction of sulfite to sulfide. This is one of several activities required for the biosynthesis of L-cysteine from sulfate. This Chromohalobacter salexigens (strain ATCC BAA-138 / DSM 3043 / CIP 106854 / NCIMB 13768 / 1H11) protein is Sulfite reductase [NADPH] hemoprotein beta-component.